A 433-amino-acid chain; its full sequence is Adenylosuccinate synthetase (433 aa).

GTP-binding positions include 13-19 and 41-43; these read GDEGKGK and GHT. The active-site Proton acceptor is the Asp-14. Asp-14 and Gly-41 together coordinate Mg(2+). IMP contacts are provided by residues 14–17, 39–42, Thr-130, Arg-144, Gln-225, Thr-240, and Arg-304; these read DEGK and NAGH. His-42 (proton donor) is an active-site residue. Position 300–306 (300–306) interacts with substrate; it reads STTGRKR. Residues Arg-306, 332-334, and 414-416 each bind GTP; these read KLD and STG.

It belongs to the adenylosuccinate synthetase family. As to quaternary structure, homodimer. Mg(2+) is required as a cofactor.

The protein localises to the cytoplasm. The enzyme catalyses IMP + L-aspartate + GTP = N(6)-(1,2-dicarboxyethyl)-AMP + GDP + phosphate + 2 H(+). Its pathway is purine metabolism; AMP biosynthesis via de novo pathway; AMP from IMP: step 1/2. Plays an important role in the de novo pathway of purine nucleotide biosynthesis. Catalyzes the first committed step in the biosynthesis of AMP from IMP. The sequence is that of Adenylosuccinate synthetase from Buchnera aphidicola subsp. Acyrthosiphon pisum (strain APS) (Acyrthosiphon pisum symbiotic bacterium).